A 340-amino-acid polypeptide reads, in one-letter code: 4-hydroxy-2-oxovalerate aldolase (340 aa).

One can recognise a Pyruvate carboxyltransferase domain in the interval 8-260; sequence VILHDMSLRD…SHGINLYDIM (253 aa). 16 to 17 contacts substrate; sequence RD. Asp17 serves as a coordination point for Mn(2+). His20 (proton acceptor) is an active-site residue. Ser170 and His199 together coordinate substrate. Mn(2+) contacts are provided by His199 and His201. Position 290 (Tyr290) interacts with substrate.

The protein belongs to the 4-hydroxy-2-oxovalerate aldolase family.

It catalyses the reaction (S)-4-hydroxy-2-oxopentanoate = acetaldehyde + pyruvate. The protein is 4-hydroxy-2-oxovalerate aldolase of Shewanella pealeana (strain ATCC 700345 / ANG-SQ1).